The chain runs to 120 residues: V-type proton ATPase subunit F (120 aa).

This sequence belongs to the V-ATPase F subunit family. V-ATPase is a heteromultimeric enzyme composed of a peripheral catalytic V1 complex (components A to H) attached to an integral membrane V0 proton pore complex (components: a, c, c', c'', d, e, f and VOA1).

It localises to the vacuole membrane. Functionally, subunit of the V1 complex of vacuolar(H+)-ATPase (V-ATPase), a multisubunit enzyme composed of a peripheral complex (V1) that hydrolyzes ATP and a membrane integral complex (V0) that translocates protons. V-ATPase is responsible for acidifying and maintaining the pH of intracellular compartments. This chain is V-type proton ATPase subunit F, found in Schizosaccharomyces pombe (strain 972 / ATCC 24843) (Fission yeast).